The primary structure comprises 192 residues: Ribosomal RNA small subunit methyltransferase G (192 aa).

S-adenosyl-L-methionine-binding positions include Gly63, Phe68, 112–113 (IE), and Arg125.

It belongs to the methyltransferase superfamily. RNA methyltransferase RsmG family.

The protein resides in the cytoplasm. The catalysed reaction is guanosine(527) in 16S rRNA + S-adenosyl-L-methionine = N(7)-methylguanosine(527) in 16S rRNA + S-adenosyl-L-homocysteine. In terms of biological role, specifically methylates the N7 position of guanine in position 527 of 16S rRNA. The chain is Ribosomal RNA small subunit methyltransferase G from Rickettsia felis (strain ATCC VR-1525 / URRWXCal2) (Rickettsia azadi).